We begin with the raw amino-acid sequence, 894 residues long: Mitogen-activated protein kinase kinase kinase kinase 3 (894 aa).

Methionine 1 carries the post-translational modification N-acetylmethionine. Residues 16–273 (FELIQRIGSG…AEKLLQHPFV (258 aa)) form the Protein kinase domain. ATP contacts are provided by residues 22-30 (IGSGTYGDV), lysine 45, and lysine 48. Aspartate 136 serves as the catalytic Proton acceptor. A phosphoserine mark is found at serine 329 and serine 398. A disordered region spans residues 410–536 (AHLEDDEGDD…DVPKPISNGL (127 aa)). Over residues 473-487 (QVPPRPPPPRLPPHK) the composition is skewed to pro residues. A compositionally biased stretch (basic and acidic residues) spans 513 to 529 (NEHRGTNLSRKEKKDVP). Residues 556–867 (PLKIHCASSW…IFRLLGSDRV (312 aa)) form the CNH domain.

Belongs to the protein kinase superfamily. STE Ser/Thr protein kinase family. STE20 subfamily. As to quaternary structure, interacts with SH3GL2. Interaction appears to regulate MAP4K3-mediated JNK activation. Mg(2+) serves as cofactor. In terms of tissue distribution, ubiquitously expressed in all tissues examined, with high levels in heart, brain, placenta, skeletal muscle, kidney and pancreas and lower levels in lung and liver.

It carries out the reaction L-seryl-[protein] + ATP = O-phospho-L-seryl-[protein] + ADP + H(+). The enzyme catalyses L-threonyl-[protein] + ATP = O-phospho-L-threonyl-[protein] + ADP + H(+). In terms of biological role, serine/threonine kinase that plays a role in the response to environmental stress. Appears to act upstream of the JUN N-terminal pathway. Activator of the Hippo signaling pathway which plays a pivotal role in organ size control and tumor suppression by restricting proliferation and promoting apoptosis. MAP4Ks act in parallel to and are partially redundant with STK3/MST2 and STK4/MST2 in the phosphorylation and activation of LATS1/2, and establish MAP4Ks as components of the expanded Hippo pathway. The sequence is that of Mitogen-activated protein kinase kinase kinase kinase 3 from Homo sapiens (Human).